A 209-amino-acid chain; its full sequence is C-type lectin domain family 6 member A (209 aa).

Over 1–20 the chain is Cytoplasmic; sequence MMQEQQPQSTEKRGWLSLRL. The chain crosses the membrane as a helical; Signal-anchor for type II membrane protein span at residues 21–41; sequence WSVAGISIALLSACFIVSCVV. Residues 42–209 are Extracellular-facing; sequence TYHFTYGETG…SICEMNKIYL (168 aa). Intrachain disulfides connect cysteine 66–cysteine 78, cysteine 79–cysteine 90, cysteine 107–cysteine 202, and cysteine 176–cysteine 194. Residues 86-203 form the C-type lectin domain; it reads FGSSCYFISS…CETRRNSICE (118 aa). Ca(2+) contacts are provided by valine 116, asparagine 118, and glutamate 122. Asparagine 131 carries N-linked (GlcNAc...) asparagine glycosylation. Residues glutamate 168, asparagine 170, and glutamate 174 each coordinate Ca(2+). Alpha-D-mannopyranose contacts are provided by residues 168-170, glutamate 174, tryptophan 182, 190-191, and arginine 198; these read EPN and ND. Asparagine 170 is a glycosylation site (N-linked (GlcNAc...) asparagine). Positions 190 and 191 each coordinate Ca(2+). Glutamate 203 lines the Ca(2+) pocket.

Associated with FCER1G. Heterodimer with CLEC4D; this heterodimer forms a pattern recognition receptor (PRR) against fungal infection. Expressed in lung, spleen, lymph node, leukocytes, bone marrow, tonsils and dendritic cells. Strongly expressed in purified monocytes and weakly in B-cells. In peripheral blood cells, preferentially expressed in plasmacytoids rather than myeloids.

The protein resides in the cell membrane. In terms of biological role, calcium-dependent lectin that acts as a pattern recognition receptor (PRR) of the innate immune system: specifically recognizes and binds alpha-mannans on C.albicans hypheas. Binding of C.albicans alpha-mannans to this receptor complex leads to phosphorylation of the immunoreceptor tyrosine-based activation motif (ITAM) of FCER1G, triggering activation of SYK, CARD9 and NF-kappa-B, consequently driving maturation of antigen-presenting cells and shaping antigen-specific priming of T-cells toward effector T-helper 1 and T-helper 17 cell subtypes. Recognizes also, in a mannose-dependent manner, allergens from house dust mite and fungi, by promoting cysteinyl leukotriene production. Recognizes soluble elements from the eggs of Shistosoma mansoni altering adaptive immune responses. This chain is C-type lectin domain family 6 member A, found in Homo sapiens (Human).